A 379-amino-acid chain; its full sequence is Citrate synthase (379 aa).

Catalysis depends on residues His225, His265, and Asp316.

Belongs to the citrate synthase family. In terms of assembly, homodimer.

The catalysed reaction is oxaloacetate + acetyl-CoA + H2O = citrate + CoA + H(+). Its pathway is carbohydrate metabolism; tricarboxylic acid cycle; isocitrate from oxaloacetate: step 1/2. Functionally, might regulate the synthesis and function of enzymes involved in later enzymatic steps of Krebs cycle. This is Citrate synthase (citZ) from Haloferax volcanii (strain ATCC 29605 / DSM 3757 / JCM 8879 / NBRC 14742 / NCIMB 2012 / VKM B-1768 / DS2) (Halobacterium volcanii).